Consider the following 328-residue polypeptide: Phosphatidate cytidylyltransferase (328 aa).

Polar residues predominate over residues 15–29 (SGRSATKSVTTNDAG). The interval 15–50 (SGRSATKSVTTNDAGTGNPAEQPARGAKQQPATETS) is disordered. A run of 7 helical transmembrane segments spans residues 58–78 (AAIVVGLSIGLVLIAVLVFVP), 103–123 (AGYLIPVIPLLIGGQAAVWLT), 124–144 (WPFGAVGALAGFGGMVVVCMI), 173–193 (ATVFLAVWVPLFCSFGAMLVY), 202–222 (FCMMIAVIASDVGGYAVGVLF), 239–259 (GFAGSLVCGITATIITATFLV), and 263–283 (PWIGALLGVLFVLTTALGDLV).

This sequence belongs to the CDS family.

It is found in the cell membrane. It catalyses the reaction a 1,2-diacyl-sn-glycero-3-phosphate + CTP + H(+) = a CDP-1,2-diacyl-sn-glycerol + diphosphate. The protein operates within phospholipid metabolism; CDP-diacylglycerol biosynthesis; CDP-diacylglycerol from sn-glycerol 3-phosphate: step 3/3. The protein is Phosphatidate cytidylyltransferase (cdsA) of Mycobacterium tuberculosis (strain CDC 1551 / Oshkosh).